The sequence spans 181 residues: Protein Syd (181 aa).

It belongs to the Syd family.

It localises to the cell inner membrane. Its function is as follows. Interacts with the SecY protein in vivo. May bind preferentially to an uncomplexed state of SecY, thus functioning either as a chelating agent for excess SecY in the cell or as a regulatory factor that negatively controls the translocase function. The chain is Protein Syd from Shigella flexneri serotype 5b (strain 8401).